Here is a 329-residue protein sequence, read N- to C-terminus: MSSFDTIAVLGGGAWGTALALTAARAGRSVTLWEHDAGNAQHLIEARESRFLPGVRLDDSIKVTQDLAEAARAQALLLVVPAQVLRSVATSLQPLIAARTPLIACAKGIEHGTHRFMTEIIAECAPNAVPAILSGPSFAADVARGLPTAVTIAATDADVAQALAQAMNSGSFRPYHSTDVRGVELGGATKNVMAIAAGIVAGRQLGASALAAMTTRGFVELVRFGKAYGARIETMHGLSGLGDLTMCCSTPQSRNFSFGMALGRGESIDTAAHGKLAEGYYTAPVLLEMAQAKGVEMPISTAVAAILDGRLGVDAAIEGLLTRPLKAEE.

NADPH-binding residues include Trp15, His35, and Lys107. 3 residues coordinate sn-glycerol 3-phosphate: Lys107, Gly135, and Ser137. Ala139 lines the NADPH pocket. Residues Lys190, Asp243, Ser253, Arg254, and Asn255 each coordinate sn-glycerol 3-phosphate. The Proton acceptor role is filled by Lys190. Arg254 is a binding site for NADPH. The NADPH site is built by Leu276 and Glu278.

Belongs to the NAD-dependent glycerol-3-phosphate dehydrogenase family.

The protein localises to the cytoplasm. The enzyme catalyses sn-glycerol 3-phosphate + NAD(+) = dihydroxyacetone phosphate + NADH + H(+). It carries out the reaction sn-glycerol 3-phosphate + NADP(+) = dihydroxyacetone phosphate + NADPH + H(+). The protein operates within membrane lipid metabolism; glycerophospholipid metabolism. Functionally, catalyzes the reduction of the glycolytic intermediate dihydroxyacetone phosphate (DHAP) to sn-glycerol 3-phosphate (G3P), the key precursor for phospholipid synthesis. This chain is Glycerol-3-phosphate dehydrogenase [NAD(P)+], found in Rhodopseudomonas palustris (strain HaA2).